A 336-amino-acid polypeptide reads, in one-letter code: Ornithine carbamoyltransferase, catabolic (336 aa).

Residues 57-60 (STRT), Gln84, Arg108, and 135-138 (HPTQ) each bind carbamoyl phosphate. L-ornithine-binding positions include Asn168, Asp232, and 236–237 (SM). Carbamoyl phosphate is bound by residues 274 to 275 (CL) and Arg321.

It belongs to the aspartate/ornithine carbamoyltransferase superfamily. OTCase family.

The protein localises to the cytoplasm. It catalyses the reaction carbamoyl phosphate + L-ornithine = L-citrulline + phosphate + H(+). The protein operates within amino-acid degradation; L-arginine degradation via ADI pathway; carbamoyl phosphate from L-arginine: step 2/2. In terms of biological role, reversibly catalyzes the transfer of the carbamoyl group from carbamoyl phosphate (CP) to the N(epsilon) atom of ornithine (ORN) to produce L-citrulline. This Burkholderia mallei (strain ATCC 23344) protein is Ornithine carbamoyltransferase, catabolic.